A 465-amino-acid polypeptide reads, in one-letter code: UPF0422 protein CBU_0937 (465 aa).

Residues 1-23 form the signal peptide; it reads MTSKLVISALGLCVSGALSTTLA. A coiled-coil region spans residues 28-60; it reads TTNQQITKRIDYLQAQINELRTQQKKERQKKKA.

Belongs to the UPF0422 family.

The protein is UPF0422 protein CBU_0937 of Coxiella burnetii (strain RSA 493 / Nine Mile phase I).